Here is a 463-residue protein sequence, read N- to C-terminus: MKFSSIPIASTLLSLLVASSVTASPLRRRDDPLNGRQFGLLALHSGNEYVHLHGFYVGDSGSVYLDPADGTDDAATFTMSNGQLSVGNRYASVSANGEIVFKSDTNSTSSGFSVGEAISSGYSLKYNGTESAVACPSLVNNQVYQVFFGVGNGNPSCVGIAVLAVLPQPISSSSTYNSTTSSYHNSTSTPPPTITSTKASTVTSTEATTVTTTTAVTVTATETYTVTATNGGSTITSTGASTVTSTQPSTVTSTQRKNTATTTKTTTYVGPSPSASSVVAYTTKCIVVPVITTAASQSEAATPSPSAAVYPLFPHGIRLIDSTKPEANSGNVYSPVVFQKQNNHTNTIFTFDVPQVSGSCELNFHLDTSGFPITVEGVNGTGRFILFNLSSVANDSTVYSNRPNRIAEIGRFNCSSSGCDYATNVTCPDSYTAVSYEMMALTDDSYLSFFEEADPLEGLTLRV.

The signal sequence occupies residues 1–23; it reads MKFSSIPIASTLLSLLVASSVTA. 2 disordered regions span residues 174–200 and 239–258; these read STYN…TKAS and GAST…QRKN.

It belongs to the but2 family.

The protein resides in the cytoplasm. This is an uncharacterized protein from Schizosaccharomyces pombe (strain 972 / ATCC 24843) (Fission yeast).